Here is an 89-residue protein sequence, read N- to C-terminus: Small ribosomal subunit protein uS15 (89 aa).

It belongs to the universal ribosomal protein uS15 family. As to quaternary structure, part of the 30S ribosomal subunit. Forms a bridge to the 50S subunit in the 70S ribosome, contacting the 23S rRNA.

In terms of biological role, one of the primary rRNA binding proteins, it binds directly to 16S rRNA where it helps nucleate assembly of the platform of the 30S subunit by binding and bridging several RNA helices of the 16S rRNA. Its function is as follows. Forms an intersubunit bridge (bridge B4) with the 23S rRNA of the 50S subunit in the ribosome. The protein is Small ribosomal subunit protein uS15 of Allorhizobium ampelinum (strain ATCC BAA-846 / DSM 112012 / S4) (Agrobacterium vitis (strain S4)).